A 428-amino-acid chain; its full sequence is C4-dicarboxylate transport protein (428 aa).

The next 9 helical transmembrane spans lie at 4–24 (SLFK…ILLG), 44–64 (LIKM…IAGM), 76–96 (VALL…LIIV), 142–162 (IGAF…LFGF), 184–204 (VIFG…FGAM), 222–242 (LIIC…GTIA), 289–309 (VVGL…SIYL), 326–346 (IFHQ…AAGV), and 352–372 (IVLA…LALI).

This sequence belongs to the dicarboxylate/amino acid:cation symporter (DAACS) (TC 2.A.23) family.

The protein resides in the cell inner membrane. In terms of biological role, responsible for the transport of dicarboxylates such as succinate, fumarate, and malate from the periplasm across the membrane. This is C4-dicarboxylate transport protein from Salmonella gallinarum (strain 287/91 / NCTC 13346).